The following is a 265-amino-acid chain: Capsule polysaccharide export inner-membrane protein BexB (265 aa).

The next 6 membrane-spanning stretches (helical) occupy residues 37–57 (IGFL…VMMW), 64–84 (KFST…AMMW), 121–141 (VAGA…IGWI), 148–168 (FYML…GLII), 178–198 (FGKI…AFFF), and 235–255 (ESIG…LVMV). Residues 37–258 (IGFLWLFVEP…LMGLVMVKNF (222 aa)) form the ABC transmembrane type-2 domain.

It belongs to the ABC-2 integral membrane protein family.

It is found in the cell inner membrane. In terms of biological role, may form an ATP-driven capsule polysaccharide export apparatus, in association with the BexA, BexC and BexD proteins. The chain is Capsule polysaccharide export inner-membrane protein BexB (bexB) from Haemophilus influenzae.